We begin with the raw amino-acid sequence, 176 residues long: ATP-dependent protease subunit HslV (176 aa).

Thr5 is a catalytic residue. Na(+)-binding residues include Ala161, Cys164, and Thr167.

The protein belongs to the peptidase T1B family. HslV subfamily. As to quaternary structure, a double ring-shaped homohexamer of HslV is capped on each side by a ring-shaped HslU homohexamer. The assembly of the HslU/HslV complex is dependent on binding of ATP.

It is found in the cytoplasm. The catalysed reaction is ATP-dependent cleavage of peptide bonds with broad specificity.. Allosterically activated by HslU binding. In terms of biological role, protease subunit of a proteasome-like degradation complex believed to be a general protein degrading machinery. This is ATP-dependent protease subunit HslV from Caldicellulosiruptor saccharolyticus (strain ATCC 43494 / DSM 8903 / Tp8T 6331).